The sequence spans 143 residues: MQLNDLKPAKGARHQKLRVGRGIGSGKGKTAGRGHKGQHSRAGGYHKVGFEGGQMPLQRRVPKFGFTSRKELISAEVRLGELNKISGDVVDLASLKAANIISRQIKRVKIFAAGKLEKPVTIRGLRVTKGVKAAVEAAGGKIE.

The disordered stretch occupies residues 20 to 52; the sequence is GRGIGSGKGKTAGRGHKGQHSRAGGYHKVGFEG. Residues 30–39 show a composition bias toward basic residues; that stretch reads TAGRGHKGQH.

It belongs to the universal ribosomal protein uL15 family. As to quaternary structure, part of the 50S ribosomal subunit.

Functionally, binds to the 23S rRNA. The protein is Large ribosomal subunit protein uL15 of Coxiella burnetii (strain CbuG_Q212) (Coxiella burnetii (strain Q212)).